The chain runs to 220 residues: MSDWTAFLKQELQQAYMQQTLDYVAKRRSEGVAVYPPKDQVFSAFTATQLSDIRVVILGQDPYHGEGQAHGLCFSVLPEVKKLPPSLKNIYKELASDINDFVIPTHGYLQSWAEQGVFLLNTVLTVEQGQAHSHKHLGWEQFTDKVITHINTHCEGVIFILWGAHAQKKGKGIDSARQHILAGPHPSPLSAHRGFFGCRHFSATNALLQSQGKTPINWQV.

The active-site Proton acceptor is Asp-61.

The protein belongs to the uracil-DNA glycosylase (UDG) superfamily. UNG family.

It is found in the cytoplasm. The catalysed reaction is Hydrolyzes single-stranded DNA or mismatched double-stranded DNA and polynucleotides, releasing free uracil.. Functionally, excises uracil residues from the DNA which can arise as a result of misincorporation of dUMP residues by DNA polymerase or due to deamination of cytosine. In Pseudoalteromonas translucida (strain TAC 125), this protein is Uracil-DNA glycosylase.